Reading from the N-terminus, the 385-residue chain is Spermidine/putrescine import ATP-binding protein PotA (385 aa).

An ABC transporter domain is found at 6–238 (IEFKNVSKVF…PINHFVATFI (233 aa)). An ATP-binding site is contributed by 40 to 47 (GASGSGKS).

It belongs to the ABC transporter superfamily. Spermidine/putrescine importer (TC 3.A.1.11.1) family. In terms of assembly, the complex is composed of two ATP-binding proteins (PotA), two transmembrane proteins (PotB and PotC) and a solute-binding protein (PotD).

It is found in the cell membrane. The catalysed reaction is ATP + H2O + polyamine-[polyamine-binding protein]Side 1 = ADP + phosphate + polyamineSide 2 + [polyamine-binding protein]Side 1.. Its function is as follows. Part of the ABC transporter complex PotABCD involved in spermidine/putrescine import. Responsible for energy coupling to the transport system. The polypeptide is Spermidine/putrescine import ATP-binding protein PotA (Streptococcus pneumoniae serotype 4 (strain ATCC BAA-334 / TIGR4)).